The following is a 319-amino-acid chain: Chromoplast-specific carotenoid-associated protein C1, chromoplastic (319 aa).

The transit peptide at 1-55 directs the protein to the chromoplast; sequence MTSIAFWNAFTVNPFPAAARRSPPPLTPFTSGALSPARKPRILEISHPRTLPSFR.

Belongs to the PAP/fibrillin family. As to expression, expressed in flower buds and floral lip tissues. Not detected in roots and leaves. Specifically expressed in conical papillate cells of adaxial epidermis of lip tissues.

The protein resides in the plastid. Its subcellular location is the chromoplast. In terms of biological role, may be involved in carotenoid sequestration within chromoplasts. The chain is Chromoplast-specific carotenoid-associated protein C1, chromoplastic (CHRC1) from Oncidium hybrid cultivar (Orchid).